The primary structure comprises 930 residues: Probable outer membrane protein pmp8 (930 aa).

Residues 1–26 (MKIPLHKLLISSTLVTPILLSIATYG) form the signal peptide. Residues 636-930 (SIYQQRGLWA…NVDCGLRYSF (295 aa)) enclose the Autotransporter domain.

The protein belongs to the PMP outer membrane protein family.

It is found in the secreted. The protein resides in the cell wall. It localises to the cell outer membrane. In Chlamydia pneumoniae (Chlamydophila pneumoniae), this protein is Probable outer membrane protein pmp8 (pmp8).